The following is a 460-amino-acid chain: 3-isopropylmalate dehydratase large subunit (460 aa).

[4Fe-4S] cluster contacts are provided by Cys-338, Cys-398, and Cys-401.

It belongs to the aconitase/IPM isomerase family. LeuC type 1 subfamily. Heterodimer of LeuC and LeuD. [4Fe-4S] cluster is required as a cofactor.

The enzyme catalyses (2R,3S)-3-isopropylmalate = (2S)-2-isopropylmalate. The protein operates within amino-acid biosynthesis; L-leucine biosynthesis; L-leucine from 3-methyl-2-oxobutanoate: step 2/4. Functionally, catalyzes the isomerization between 2-isopropylmalate and 3-isopropylmalate, via the formation of 2-isopropylmaleate. This chain is 3-isopropylmalate dehydratase large subunit, found in Streptococcus gordonii (strain Challis / ATCC 35105 / BCRC 15272 / CH1 / DL1 / V288).